A 264-amino-acid polypeptide reads, in one-letter code: Phosphonates import ATP-binding protein PhnC (264 aa).

Residues 8-255 (LQAENLRMTF…KLIEIYGPEF (248 aa)) form the ABC transporter domain. 40 to 47 (GPSGSGKS) is an ATP binding site.

This sequence belongs to the ABC transporter superfamily. Phosphonates importer (TC 3.A.1.9.1) family. In terms of assembly, the complex is composed of two ATP-binding proteins (PhnC), two transmembrane proteins (PhnE) and a solute-binding protein (PhnD).

Its subcellular location is the cell inner membrane. The catalysed reaction is phosphonate(out) + ATP + H2O = phosphonate(in) + ADP + phosphate + H(+). Its function is as follows. Part of the ABC transporter complex PhnCDE involved in phosphonates import. Responsible for energy coupling to the transport system. The sequence is that of Phosphonates import ATP-binding protein PhnC from Maricaulis maris (strain MCS10) (Caulobacter maris).